We begin with the raw amino-acid sequence, 363 residues long: Src kinase-associated phosphoprotein 1 (363 aa).

The segment at 62-94 (PFPSDYKEEDGSDDNRSSSLGRSAQSDDASLAS) is disordered. Residues 84 to 94 (SAQSDDASLAS) show a composition bias toward low complexity. The 104-residue stretch at 118–221 (NVLKQGYLEK…WVDQIKIVLR (104 aa)) folds into the PH domain. The segment at 227–273 (VIPVDDEEEEEEEEETYDDIEGEGGPPLPQPLSGTWGRGGDTGAADE) is disordered. Residues 230 to 248 (VDDEEEEEEEEETYDDIEG) are compositionally biased toward acidic residues. One can recognise an SH3 domain in the interval 301–362 (EYANYYQGLW…PKDFLHPAYI (62 aa)).

This sequence belongs to the SKAP family. In terms of assembly, homodimer. Phosphorylated on tyrosines.

The protein localises to the cytoplasm. It is found in the nucleus. The protein resides in the cell membrane. Positively regulates T-cell receptor signaling. Required for optimal conjugation between T-cells and antigen-presenting cells. This chain is Src kinase-associated phosphoprotein 1 (skap1), found in Takifugu rubripes (Japanese pufferfish).